The following is a 357-amino-acid chain: Non-structural protein NS2 (357 aa).

2 disordered regions span residues 162 to 199 (QNERESAPRLQVQSVSPREESRWMDDDEAKVDEEAKEM) and 228 to 268 (LDEK…KTHI). 2 stretches are compositionally biased toward acidic residues: residues 230 to 243 (EKDEEDRDEREDEE) and 250 to 260 (DDDEQGEDASD).

The protein belongs to the orbivirus non-structural protein NS2 family.

Its function is as follows. Single-stranded RNA-binding protein. This is Non-structural protein NS2 (Segment-8) from Antilocapra americana (Pronghorn).